The sequence spans 192 residues: Large ribosomal subunit protein uL5 (192 aa).

It belongs to the universal ribosomal protein uL5 family. As to quaternary structure, part of the 50S ribosomal subunit; part of the 5S rRNA/L5/L18/L25 subcomplex. Contacts the 5S rRNA and the P site tRNA. Forms a bridge to the 30S subunit in the 70S ribosome.

This is one of the proteins that bind and probably mediate the attachment of the 5S RNA into the large ribosomal subunit, where it forms part of the central protuberance. In the 70S ribosome it contacts protein S13 of the 30S subunit (bridge B1b), connecting the 2 subunits; this bridge is implicated in subunit movement. Contacts the P site tRNA; the 5S rRNA and some of its associated proteins might help stabilize positioning of ribosome-bound tRNAs. The protein is Large ribosomal subunit protein uL5 of Paenarthrobacter aurescens (strain TC1).